The chain runs to 389 residues: S-adenosylmethionine synthase (389 aa).

An ATP-binding site is contributed by H17. D19 is a binding site for Mg(2+). A K(+)-binding site is contributed by E45. The L-methionine site is built by E58 and Q101. Residues 101 to 111 (QSPDISQGVTE) form a flexible loop region. Residues 168 to 170 (DSK), 234 to 235 (RF), D243, 249 to 250 (RK), A266, and K270 contribute to the ATP site. An L-methionine-binding site is contributed by D243. L-methionine is bound at residue K274.

Belongs to the AdoMet synthase family. As to quaternary structure, homotetramer; dimer of dimers. Mg(2+) serves as cofactor. Requires K(+) as cofactor.

The protein localises to the cytoplasm. It catalyses the reaction L-methionine + ATP + H2O = S-adenosyl-L-methionine + phosphate + diphosphate. The protein operates within amino-acid biosynthesis; S-adenosyl-L-methionine biosynthesis; S-adenosyl-L-methionine from L-methionine: step 1/1. Functionally, catalyzes the formation of S-adenosylmethionine (AdoMet) from methionine and ATP. The overall synthetic reaction is composed of two sequential steps, AdoMet formation and the subsequent tripolyphosphate hydrolysis which occurs prior to release of AdoMet from the enzyme. The chain is S-adenosylmethionine synthase from Geobacter metallireducens (strain ATCC 53774 / DSM 7210 / GS-15).